Consider the following 414-residue polypeptide: COUP transcription factor 2 (414 aa).

Residues 1 to 72 are disordered; that stretch reads MAMVVSTWRD…PGGPGSDKQQ (72 aa). Residues 27 to 37 are compositionally biased toward pro residues; that stretch reads PPVPGPPPGAP. Positions 38–57 are enriched in low complexity; it reads HTPQTPGQGGPASTPAQTAA. T51 is modified (phosphothreonine). Over residues 58-67 the composition is skewed to gly residues; it reads GGQGGPGGPG. A DNA-binding region (nuclear receptor) is located at residues 76–151; that stretch reads HIECVVCGDK…VGMRREAVQR (76 aa). 2 consecutive NR C4-type zinc fingers follow at residues 79–99 and 115–139; these read CVVCGDKSSGKHYGQFTCEGC and CRANRNCPIDQHHRNQCQYCRLKKC. The interval 117 to 414 is interaction with ZFPM2; that stretch reads ANRNCPIDQH…SFNWPYMAIQ (298 aa). The NR LBD domain occupies 177–403; that stretch reads YLSGYISLLL…TLIRDMLLSG (227 aa). Residues 337-414 form an important for dimerization region; it reads LQEKSQCALE…SFNWPYMAIQ (78 aa).

This sequence belongs to the nuclear hormone receptor family. NR2 subfamily. In terms of assembly, interacts with SQSTM1. Binds DNA as a dimer; homodimer or heterodimer with NR2F6. Interacts with NCOA1, NCOA2, NCOA3 and PPARGC1A. Interacts with ZFPM2.

It is found in the nucleus. Its function is as follows. Ligand-activated transcription factor. Activated by high concentrations of 9-cis-retinoic acid and all-trans-retinoic acid, but not by dexamethasone, cortisol or progesterone (in vitro). Regulation of the apolipoprotein A-I gene transcription. Binds to DNA site A. May be required to establish ovary identity during early gonad development. This chain is COUP transcription factor 2 (NR2F2), found in Bos taurus (Bovine).